A 756-amino-acid polypeptide reads, in one-letter code: NADP-dependent malic enzyme (756 aa).

The tract at residues 1 to 428 is malic enzyme; sequence MTEQLRQAAL…KLTQFVYKTS (428 aa). The Proton donor role is filled by Tyr-39. Lys-94 acts as the Proton acceptor in catalysis. The a divalent metal cation site is built by Glu-136, Asp-137, and Asp-162. NADP(+) is bound by residues 195 to 198, Asn-288, and Asn-320; that span reads AGAA. The segment at 429–756 is phosphate acetyltransferase; that stretch reads LFMRPIFSQA…AYAAVKAQQE (328 aa).

This sequence in the N-terminal section; belongs to the malic enzymes family. The protein in the C-terminal section; belongs to the phosphate acetyltransferase and butyryltransferase family. Mg(2+) is required as a cofactor. It depends on Mn(2+) as a cofactor.

The catalysed reaction is (S)-malate + NADP(+) = pyruvate + CO2 + NADPH. It catalyses the reaction oxaloacetate + H(+) = pyruvate + CO2. The polypeptide is NADP-dependent malic enzyme (maeB) (Haemophilus influenzae (strain ATCC 51907 / DSM 11121 / KW20 / Rd)).